Here is a 455-residue protein sequence, read N- to C-terminus: 3-phosphoshikimate 1-carboxyvinyltransferase (455 aa).

Residues 1-19 show a composition bias toward polar residues; sequence MSHGASSRPATARKSSGLS. Residues 1 to 25 are disordered; that stretch reads MSHGASSRPATARKSSGLSGTVRIP. Phosphoenolpyruvate is bound at residue lysine 28. Residues serine 29 and arginine 33 each contribute to the 3-phosphoshikimate site. Arginine 128 contacts phosphoenolpyruvate. 3-phosphoshikimate-binding residues include serine 173, alanine 174, glutamine 175, aspartate 326, and lysine 353. Glutamine 175 provides a ligand contact to phosphoenolpyruvate. Aspartate 326 serves as the catalytic Proton acceptor. The phosphoenolpyruvate site is built by arginine 357 and arginine 405.

Belongs to the EPSP synthase family. As to quaternary structure, monomer.

Its subcellular location is the cytoplasm. The enzyme catalyses 3-phosphoshikimate + phosphoenolpyruvate = 5-O-(1-carboxyvinyl)-3-phosphoshikimate + phosphate. Its pathway is metabolic intermediate biosynthesis; chorismate biosynthesis; chorismate from D-erythrose 4-phosphate and phosphoenolpyruvate: step 6/7. Its activity is regulated as follows. Is resistant to inhibition by glyphosate (glyphosate-tolerant) like other members of class II EPSPS, in contrast to class I EPSPS, which is glyphosate-sensitive. Is much less sensitive to inhibition by the (R)-difluoromethyl and (R)-phosphonate analogs of the tetrahedral reaction intermediate than the representative class I EPSPS from E.coli. Is highly activated in the presence of cations, such as NH4(+), Rb(+), and K(+). Catalyzes the transfer of the enolpyruvyl moiety of phosphoenolpyruvate (PEP) to the 5-hydroxyl of shikimate-3-phosphate (S3P) to produce enolpyruvyl shikimate-3-phosphate and inorganic phosphate. The protein is 3-phosphoshikimate 1-carboxyvinyltransferase of Agrobacterium sp. (strain CP4).